The following is an 873-amino-acid chain: Aminopeptidase M1-D (873 aa).

Residues 96-203 (LGEGVLAMRF…MSTYLVAIVV (108 aa)) form a required for membrane association region. Substrate is bound by residues glutamate 136 and 269-273 (GAMEN). Histidine 305 serves as a coordination point for Zn(2+). The active-site Proton acceptor is the glutamate 306. Zn(2+) is bound by residues histidine 309 and glutamate 328. Residues 721 to 722 (LL) carry the Dileucine internalization motif motif.

Belongs to the peptidase M1 family. In terms of assembly, homodimer. It depends on Zn(2+) as a cofactor.

The protein localises to the membrane. It localises to the microsome membrane. Its subcellular location is the cytoplasm. The enzyme catalyses Release of an N-terminal amino acid, Xaa-|-Yaa- from a peptide, amide or arylamide. Xaa is preferably Ala, but may be most amino acids including Pro (slow action). When a terminal hydrophobic residue is followed by a prolyl residue, the two may be released as an intact Xaa-Pro dipeptide.. The chain is Aminopeptidase M1-D from Oryza sativa subsp. japonica (Rice).